A 277-amino-acid polypeptide reads, in one-letter code: Digeranylgeranylglyceryl phosphate synthase (277 aa).

7 consecutive transmembrane segments (helical) span residues 16–36 (ILAGVVGILGSLVAYEGIPSI), 40–60 (GLVFLVVYLGCSAGNTINDYF), 101–121 (FLGVEALLFALGAYALTFIYA), 129–149 (FIGNVAVALLTAATPIYGALG), 153–173 (VGLAGYLAICAFLVNVSREIM), 205–225 (IFGVLTVITSFLPVKVGIGLG), and 257–277 (LKIATFIAVISFLLGALTKGV).

The protein belongs to the UbiA prenyltransferase family. DGGGP synthase subfamily. Mg(2+) is required as a cofactor.

The protein localises to the cell membrane. It catalyses the reaction sn-3-O-(geranylgeranyl)glycerol 1-phosphate + (2E,6E,10E)-geranylgeranyl diphosphate = 2,3-bis-O-(geranylgeranyl)-sn-glycerol 1-phosphate + diphosphate. The protein operates within membrane lipid metabolism; glycerophospholipid metabolism. In terms of biological role, prenyltransferase that catalyzes the transfer of the geranylgeranyl moiety of geranylgeranyl diphosphate (GGPP) to the C2 hydroxyl of (S)-3-O-geranylgeranylglyceryl phosphate (GGGP). This reaction is the second ether-bond-formation step in the biosynthesis of archaeal membrane lipids. The chain is Digeranylgeranylglyceryl phosphate synthase from Pyrococcus abyssi (strain GE5 / Orsay).